The following is a 205-amino-acid chain: Large ribosomal subunit protein uL18 (205 aa).

Belongs to the universal ribosomal protein uL18 family. Part of the 50S ribosomal subunit. Contacts the 5S and 23S rRNAs.

In terms of biological role, this is one of the proteins that bind and probably mediate the attachment of the 5S RNA into the large ribosomal subunit, where it forms part of the central protuberance. This Pyrobaculum neutrophilum (strain DSM 2338 / JCM 9278 / NBRC 100436 / V24Sta) (Thermoproteus neutrophilus) protein is Large ribosomal subunit protein uL18.